Consider the following 713-residue polypeptide: Bifunctional protein gal10 (713 aa).

Positions 1–350 (MAVQDEYILV…TIENPFGFQI (350 aa)) are galactowaldenase. NAD(+) is bound at residue 7–38 (YILVTGGAGYIGSHTVIELINHGYKVIIVDNL). Residues 351–713 (DNYKWKLFNT…SASYNSGEYY (363 aa)) are mutarotase. His-532 acts as the For mutarotase activity in catalysis.

It in the N-terminal section; belongs to the NAD(P)-dependent epimerase/dehydratase family. In the C-terminal section; belongs to the aldose epimerase family. Requires NAD(+) as cofactor.

It catalyses the reaction UDP-alpha-D-glucose = UDP-alpha-D-galactose. The catalysed reaction is alpha-D-glucose = beta-D-glucose. It functions in the pathway carbohydrate metabolism; galactose metabolism. The protein operates within carbohydrate metabolism; hexose metabolism. Its function is as follows. Mutarotase converts alpha-aldose to the beta-anomer. It is active on D-glucose, L-arabinose, D-xylose, D-galactose, maltose and lactose. This is Bifunctional protein gal10 (gal10) from Schizosaccharomyces pombe (strain 972 / ATCC 24843) (Fission yeast).